The primary structure comprises 239 residues: Norbelladine 4'-O-methyltransferase 2 (239 aa).

S-adenosyl-L-methionine-binding positions include Val55, Glu77, 79–80, Ser85, Asp103, and Ala132; that span reads GV. Asp155 is a binding site for a divalent metal cation. Asp157 contacts S-adenosyl-L-methionine. A divalent metal cation contacts are provided by Asp181 and Asn182.

This sequence belongs to the class I-like SAM-binding methyltransferase superfamily. Cation-dependent O-methyltransferase family. Mg(2+) is required as a cofactor.

It carries out the reaction norbelladine + S-adenosyl-L-methionine = 4'-O-methylnorbelladine + S-adenosyl-L-homocysteine + H(+). Its pathway is alkaloid biosynthesis. 4'-O-methyltransferase converting norbelladine to 4'-O-methylnorbelladine. 4'-O-methylnorbelladine is a precursor to all Amaryllidaceae alkaloids such as galanthamine, lycorine and haemanthamine, and including haemanthamine- and crinamine-type alkaloids, promising anticancer agents. This Narcissus aff. pseudonarcissus MK-2014 (Daffodil) protein is Norbelladine 4'-O-methyltransferase 2.